The primary structure comprises 320 residues: MKIQIIWLTLVLIVVEANAVKQGKNATIPALIVFGDSIMDTGNNNNLPTLLKCNFPPYGKDYPGGFATGRFSDGRVPSDLIAEKIGLAKTLPAYMNPYLKPEDLLKGVTFASGGTGYDPLTAKIMSVISVWDQLIYFKEYISKIKRHFGEEKAKDILEHSFFLVVSSSNDLAHTYLAQAHRYDRTSYANFLADSAVHFVRELHKLGAQKIGVFSAVPVGCVPLQRTVFGDKELDGVILYINVYDTLFDMIQHPKKYGFEVADRGCCGKGLLTISYLCNSLNQFTCSNSSAYIFWDSYHPSKRAYQVIVDNLLDKYLSKVY.

A signal peptide spans 1 to 19 (MKIQIIWLTLVLIVVEANA). Asn25 is a glycosylation site (N-linked (GlcNAc...) asparagine). Residue Ser37 is the Nucleophile of the active site. N-linked (GlcNAc...) asparagine glycosylation occurs at Asn287. Active-site residues include Asp295 and His298.

The protein belongs to the 'GDSL' lipolytic enzyme family.

The protein localises to the secreted. This chain is GDSL esterase/lipase At3g43570, found in Arabidopsis thaliana (Mouse-ear cress).